A 161-amino-acid polypeptide reads, in one-letter code: Nucleotide-binding protein Bamb_2603 (161 aa).

It belongs to the YajQ family.

Its function is as follows. Nucleotide-binding protein. In Burkholderia ambifaria (strain ATCC BAA-244 / DSM 16087 / CCUG 44356 / LMG 19182 / AMMD) (Burkholderia cepacia (strain AMMD)), this protein is Nucleotide-binding protein Bamb_2603.